We begin with the raw amino-acid sequence, 364 residues long: GTPase Obg (364 aa).

One can recognise an Obg domain in the interval 1 to 161 (MRFVDEVTIS…KYLRLELKIL (161 aa)). The 173-residue stretch at 162 to 334 (ADAGIIGLPN…LVDAIWKLQS (173 aa)) folds into the OBG-type G domain. GTP contacts are provided by residues 168-175 (GLPNAGKS), 193-197 (FTTLN), 217-220 (DIPG), 287-290 (NKID), and 315-317 (SAE). Serine 175 and threonine 195 together coordinate Mg(2+).

This sequence belongs to the TRAFAC class OBG-HflX-like GTPase superfamily. OBG GTPase family. As to quaternary structure, monomer. Mg(2+) serves as cofactor.

Its subcellular location is the cytoplasm. In terms of biological role, an essential GTPase which binds GTP, GDP and possibly (p)ppGpp with moderate affinity, with high nucleotide exchange rates and a fairly low GTP hydrolysis rate. Plays a role in control of the cell cycle, stress response, ribosome biogenesis and in those bacteria that undergo differentiation, in morphogenesis control. The chain is GTPase Obg from Lawsonia intracellularis (strain PHE/MN1-00).